The chain runs to 253 residues: Triosephosphate isomerase (253 aa).

Residue 9-11 (NWK) participates in substrate binding. The Electrophile role is filled by histidine 94. The Proton acceptor role is filled by glutamate 163. Substrate-binding positions include glycine 169, serine 209, and 230–231 (GG).

The protein belongs to the triosephosphate isomerase family. As to quaternary structure, homodimer.

It is found in the cytoplasm. It catalyses the reaction D-glyceraldehyde 3-phosphate = dihydroxyacetone phosphate. Its pathway is carbohydrate biosynthesis; gluconeogenesis. It functions in the pathway carbohydrate degradation; glycolysis; D-glyceraldehyde 3-phosphate from glycerone phosphate: step 1/1. In terms of biological role, involved in the gluconeogenesis. Catalyzes stereospecifically the conversion of dihydroxyacetone phosphate (DHAP) to D-glyceraldehyde-3-phosphate (G3P). The protein is Triosephosphate isomerase of Dehalococcoides mccartyi (strain CBDB1).